The chain runs to 325 residues: uncharacterized protein (325 aa).

The tract at residues 37–85 (EKPTYTPAKPVKKAPSVVQPRRVSRTLRSSESVHTNHGPERVFESPTPA) is disordered. S52 carries the post-translational modification Phosphoserine. Residues 62–71 (TLRSSESVHT) are compositionally biased toward polar residues. One can recognise an FCP1 homology domain in the interval 153–311 (EDEGKKCLIL…IDLIPFLEHL (159 aa)).

This is an uncharacterized protein from Schizosaccharomyces pombe (strain 972 / ATCC 24843) (Fission yeast).